The chain runs to 177 residues: Coatomer subunit zeta-1 (177 aa).

The protein belongs to the adaptor complexes small subunit family. As to quaternary structure, oligomeric complex that consists of at least the alpha, beta, beta', gamma, delta, epsilon and zeta subunits.

The protein localises to the cytoplasm. The protein resides in the golgi apparatus membrane. It localises to the cytoplasmic vesicle. Its subcellular location is the COPI-coated vesicle membrane. In terms of biological role, the coatomer is a cytosolic protein complex that binds to dilysine motifs and reversibly associates with Golgi non-clathrin-coated vesicles, which further mediate biosynthetic protein transport from the ER, via the Golgi up to the trans Golgi network. Coatomer complex is required for budding from Golgi membranes, and is essential for the retrograde Golgi-to-ER transport of dilysine-tagged proteins. The zeta subunit may be involved in regulating the coat assembly and, hence, the rate of biosynthetic protein transport due to its association-dissociation properties with the coatomer complex. This Arabidopsis thaliana (Mouse-ear cress) protein is Coatomer subunit zeta-1.